The sequence spans 290 residues: AA9 family lytic polysaccharide monooxygenase A (290 aa).

A signal peptide spans 1 to 17 (MKLSLLASVALVPFVSA). Cu(2+) contacts are provided by His18 and His101. A disulfide bridge connects residues Cys67 and Cys189. Residue His176 coordinates O2. Position 187 (Tyr187) interacts with Cu(2+). N-linked (GlcNAc...) asparagine glycans are attached at residues Asn220 and Asn254. The segment at 240-290 (GGSGSGSSSYSKVANVTSSDESSQSGASSSQGTVSTCPNKYNRRHARQFKP) is disordered. Residues 245–275 (GSSSYSKVANVTSSDESSQSGASSSQGTVST) show a composition bias toward low complexity. The span at 280–290 (YNRRHARQFKP) shows a compositional bias: basic residues.

The protein belongs to the polysaccharide monooxygenase AA9 family. Cu(2+) is required as a cofactor.

The protein resides in the secreted. It catalyses the reaction [(1-&gt;4)-beta-D-glucosyl]n+m + reduced acceptor + O2 = 4-dehydro-beta-D-glucosyl-[(1-&gt;4)-beta-D-glucosyl]n-1 + [(1-&gt;4)-beta-D-glucosyl]m + acceptor + H2O.. Functionally, lytic polysaccharide monooxygenase (LPMO) that depolymerizes crystalline and amorphous polysaccharides via the oxidation of scissile alpha- or beta-(1-4)-glycosidic bonds, yielding exclusively C1 oxidation products. Catalysis by LPMOs requires the reduction of the active-site copper from Cu(II) to Cu(I) by a reducing agent and H(2)O(2) or O(2) as a cosubstrate. The polypeptide is AA9 family lytic polysaccharide monooxygenase A (Aspergillus fumigatus (strain ATCC MYA-4609 / CBS 101355 / FGSC A1100 / Af293) (Neosartorya fumigata)).